The primary structure comprises 887 residues: Exocyst complex component SEC3A (887 aa).

Coiled coils occupy residues 221 to 248 (IGEAEAFSERLKRELQALEAANVHAILE) and 281 to 301 (LRHMREDIESIETRNNKLEMQ). Residues 542-581 (GAGNDKKSQSNNDDGNDDDDLGIMDIDETDKKPGKNSPDL) form a disordered region. A compositionally biased stretch (acidic residues) spans 555–569 (DGNDDDDLGIMDIDE).

This sequence belongs to the SEC3 family. As to quaternary structure, the exocyst complex is composed of SEC3, SEC5, SEC6, SEC8, SEC10, EXO70A1 and EXO84B. Interacts with EXO70A1, SEC5A and ICR1, but not with ICR2. Binds to EXO70H1. Binds directly to B1L. Widely expressed. Preferentially expressed in tissues containing dividing and expanding cells, such as the shoot apical meristem, root tip, lateral root primordia and developing embryos.

It localises to the cytoplasm. It is found in the cytosol. The protein resides in the cell membrane. The protein localises to the cytoskeleton. Its subcellular location is the phragmoplast. It localises to the secreted. It is found in the extracellular exosome. Its function is as follows. Component of the exocyst complex involved in the docking of exocytic vesicles with fusion sites on the plasma membrane during regulated or polarized secretion. Involved in polarized cell growth and organ morphogenesis. During cytokinesis, involved in cell plate initiation, cell plate maturation and formation of new primary cell wall. During cytokinesis, involved in cell plate initiation, cell plate maturation and formation of new primary cell wall. This is Exocyst complex component SEC3A from Arabidopsis thaliana (Mouse-ear cress).